A 548-amino-acid chain; its full sequence is CTP synthase (548 aa).

Residues 1–266 (MRVNYIFVTG…DNYICKRFNL (266 aa)) form an amidoligase domain region. S14 provides a ligand contact to CTP. S14 is a binding site for UTP. ATP contacts are provided by residues 15–20 (SLGKGI) and D72. The Mg(2+) site is built by D72 and E140. CTP is bound by residues 147-149 (DIE), 187-192 (KTKPTQ), and K223. UTP is bound by residues 187 to 192 (KTKPTQ) and K223. The region spanning 291–543 (TVGMVGKYIE…IKAAIEYQHR (253 aa)) is the Glutamine amidotransferase type-1 domain. G353 lines the L-glutamine pocket. C380 acts as the Nucleophile; for glutamine hydrolysis in catalysis. L-glutamine contacts are provided by residues 381 to 384 (LGMQ), E404, and R471. Catalysis depends on residues H516 and E518.

Belongs to the CTP synthase family. Homotetramer.

It carries out the reaction UTP + L-glutamine + ATP + H2O = CTP + L-glutamate + ADP + phosphate + 2 H(+). The enzyme catalyses L-glutamine + H2O = L-glutamate + NH4(+). The catalysed reaction is UTP + NH4(+) + ATP = CTP + ADP + phosphate + 2 H(+). It functions in the pathway pyrimidine metabolism; CTP biosynthesis via de novo pathway; CTP from UDP: step 2/2. With respect to regulation, allosterically activated by GTP, when glutamine is the substrate; GTP has no effect on the reaction when ammonia is the substrate. The allosteric effector GTP functions by stabilizing the protein conformation that binds the tetrahedral intermediate(s) formed during glutamine hydrolysis. Inhibited by the product CTP, via allosteric rather than competitive inhibition. Functionally, catalyzes the ATP-dependent amination of UTP to CTP with either L-glutamine or ammonia as the source of nitrogen. Regulates intracellular CTP levels through interactions with the four ribonucleotide triphosphates. The polypeptide is CTP synthase (Blochmanniella pennsylvanica (strain BPEN)).